The sequence spans 177 residues: MKALLLTFGLSLLAALQAQAFPTTEENQDVSGTWYLKAAAWDKEIPDKKFGSVSVTPMKIKTLEGGNLQVKFTVLIAGRCKEMSTVLEKTDEPAKYTAYSGKQVLYIIPSSVEDHYIFYYEGKIHRHHFQIAKLVGRDPEINQEALEDFQSVVRAGGLNPDNIFIPKQSETCPLGSN.

Residues 1-18 form the signal peptide; the sequence is MKALLLTFGLSLLAALQA. C80 and C172 are disulfide-bonded.

This sequence belongs to the calycin superfamily. Lipocalin family. In terms of assembly, homodimer.

It localises to the secreted. In terms of biological role, could play a role in taste reception. Could be necessary for the concentration and delivery of sapid molecules in the gustatory system. This is von Ebner gland protein 1 (Vegp1) from Rattus norvegicus (Rat).